The primary structure comprises 347 residues: Probable replication factor C subunit 5 (347 aa).

64–71 provides a ligand contact to ATP; that stretch reads GPPGTGKT.

Belongs to the activator 1 small subunits family. As to quaternary structure, heteropentamer of various rfc subunits that forms a complex (RFC) with PCNA in the presence of ATP.

It is found in the nucleus. The elongation of primed DNA templates by DNA polymerase delta and epsilon requires the action of the accessory proteins PCNA and activator 1. This is Probable replication factor C subunit 5 (rfc5) from Dictyostelium discoideum (Social amoeba).